A 426-amino-acid polypeptide reads, in one-letter code: MGLSYGIFICFLLLGGMELCCPQTIWPTETYYPLTSRPPVMVDCLESQLVVTVSKDLFGTGKLIRPADLTLGPENCEPLVSMDTDDVVRFEVGLHECGSRVQVTDNALVYSTFLIHSPRPAGNLSILRTNRAEVPIECHYPRHSNVSSQAILPTWVPFRTTMLFEEKLVFSLRLMEEDWGSEKQSPTFQLGDIAHLQAEVHTGSHMPLRLFVDHCVATLTPDRNAFLHHKIVDFHGCLVDGLYNSSSAFKAPRPRPETLQFTVDVFHFAKDSRNTIYITCHLKVTPADRVPDQLNKACSFIKSTKRWYPVEGSADICRCCNKGSCGLPGRSRRLSHLERGWRKSVSHTRNRRHVTEEAEITVGPLIFLGKASDHGIEGSTSPHTSVMLGLGLATVVSLTLATIVLVLAKRHRTASHPVICPASVSQ.

Positions 1-22 (MGLSYGIFICFLLLGGMELCCP) are cleaved as a signal peptide. Pyrrolidone carboxylic acid is present on Gln-23. Residues 23–385 (QTIWPTETYY…IEGSTSPHTS (363 aa)) lie on the Extracellular side of the membrane. One can recognise a ZP domain in the interval 43-305 (DCLESQLVVT…KACSFIKSTK (263 aa)). Intrachain disulfides connect Cys-44–Cys-138 and Cys-76–Cys-97. N-linked (GlcNAc...) asparagine glycans are attached at residues Asn-123 and Asn-145. 3 O-linked (GalNAc...) threonine glycosylation sites follow: Thr-154, Thr-160, and Thr-161. Cystine bridges form between Cys-215–Cys-280 and Cys-237–Cys-298. Residue Asn-244 is glycosylated (N-linked (GlcNAc...) asparagine). A propeptide spans 351 to 426 (RRHVTEEAEI…PVICPASVSQ (76 aa)) (removed in mature form). A helical transmembrane segment spans residues 386–406 (VMLGLGLATVVSLTLATIVLV). The Cytoplasmic segment spans residues 407 to 426 (LAKRHRTASHPVICPASVSQ).

This sequence belongs to the ZP domain family. ZPC subfamily. As to quaternary structure, polymers of ZP2 and ZP3 organized into long filaments cross-linked by ZP1 homodimers. Interacts with ZP1 and ZP2. In terms of processing, proteolytically cleaved before the transmembrane segment to yield the secreted ectodomain incorporated in the zona pellucida. N-glycosylated. Post-translationally, O-glycosylated; removal of O-linked glycans may play an important role in the post-fertilization block to polyspermy. Expressed in oocytes.

It is found in the zona pellucida. Its subcellular location is the cell membrane. Functionally, component of the zona pellucida, an extracellular matrix surrounding oocytes which mediates sperm binding, induction of the acrosome reaction and prevents post-fertilization polyspermy. The zona pellucida is composed of 3 to 4 glycoproteins, ZP1, ZP2, ZP3, and ZP4. ZP3 is essential for sperm binding and zona matrix formation. The protein is Zona pellucida sperm-binding protein 3 (ZP3) of Canis lupus familiaris (Dog).